The following is a 111-amino-acid chain: Large ribosomal subunit protein uL22 (111 aa).

It belongs to the universal ribosomal protein uL22 family. Part of the 50S ribosomal subunit.

This protein binds specifically to 23S rRNA; its binding is stimulated by other ribosomal proteins, e.g. L4, L17, and L20. It is important during the early stages of 50S assembly. It makes multiple contacts with different domains of the 23S rRNA in the assembled 50S subunit and ribosome. Functionally, the globular domain of the protein is located near the polypeptide exit tunnel on the outside of the subunit, while an extended beta-hairpin is found that lines the wall of the exit tunnel in the center of the 70S ribosome. The chain is Large ribosomal subunit protein uL22 from Francisella philomiragia subsp. philomiragia (strain ATCC 25017 / CCUG 19701 / FSC 153 / O#319-036).